A 712-amino-acid chain; its full sequence is TGF-beta-activated kinase 1 and MAP3K7-binding protein 3 (712 aa).

At alanine 2 the chain carries N-acetylalanine. The region spanning 8 to 51 is the CUE domain; that stretch reads LDIQVLHDLRQRFPEIPEGVVSQCMLQNNNNLEACCRALSQESS. Residues serine 60, serine 101, and serine 103 each carry the phosphoserine modification. 4 disordered regions span residues 141–189, 227–345, 369–447, and 475–509; these read FMNE…HIPR, PGSI…KQGS, TVEP…SPRV, and ERSA…SSGS. The segment covering 163 to 173 has biased composition (polar residues); the sequence is MQTGMNPSAMQ. Composition is skewed to low complexity over residues 233–249 and 269–290; these read RQTS…QSTP and YPHQ…IPQS. Pro residues predominate over residues 322–332; that stretch reads PPSPSTTPPHP. Composition is skewed to polar residues over residues 336–345 and 371–404; these read GPPSYQKQGS and EPSQ…TATT. Residue serine 385 is modified to Phosphoserine. Threonine 404 is subject to Phosphothreonine. The segment covering 405–417 has biased composition (low complexity); the sequence is PPSSSPSRGISSQ. Residues serine 409 and serine 492 each carry the phosphoserine modification. Serine 506 bears the Phosphoserine; by MAPKAPK2 and MAPKAPK3 mark. Residues 517–559 adopt a coiled-coil conformation; sequence ALLLHQRARMERLAKQLKLEKEELERLKSEVNGMEHDLMQRRL. Residues 609-636 are disordered; it reads MNNFYDNIEPGPVVPPKPSKKDSSDPCT. The segment covering 627-636 has biased composition (basic and acidic residues); it reads SKKDSSDPCT. A Glycyl lysine isopeptide (Lys-Gly) (interchain with G-Cter in ubiquitin) cross-link involves residue lysine 649. Positions 658-667 are enriched in basic and acidic residues; the sequence is QAAAADEHRT. The tract at residues 658–682 is disordered; the sequence is QAAAADEHRTGSTQSPRTQPRDEDY. The RanBP2-type zinc finger occupies 682-712; the sequence is YEGAPWNCDSCTFLNHPALNRCEQCEMPRYT. Cysteine 692 bears the (Microbial infection) S-methylcysteine mark.

Interacts with TAB1, TAB2, MAP3K7, TRAF2 and TRAF6. The minimal TAB3-containing complex (TAB1-MAP3K7-TAB3) appears not to contain TAB2. However, it seems sensible to consider that TAB2 may also join this complex and may act in a cooperative manner with TAB3. Interacts with DYNC2I2 (via the WD domains). Interacts with RBCK1. Binds 'Lys-63'-linked polyubiquitin chains. Interacts with TRIM5. Interacts with TRIM38 (via B30.2/SPRY domain), leading to its translocation to lysosomes and degradation. Interacts with ASB1. In terms of assembly, (Microbial infection) Interacts with M.tuberculosis PtpA, which blocks the NF-kappa-B signaling pathway. In terms of processing, ubiquitinated; following IL1 stimulation or TRAF6 overexpression. Ubiquitinated by AMFR via 'Lys-27'-linked polyubiquitination; leading to TAK1/MAP3K7 activation. Post-translationally, degraded in a lysosome-dependent manner following interaction with TRIM38. Phosphorylated at Ser-506 by MAPKAPK2 and MAPKAPK3 following IL1 treatment. In terms of processing, (Microbial infection) Methylated at Cys-692 by enteropathogenic E.coli protein NleE or S.flexneri protein OspZ: methylation disrupts zinc-binding and ability to bind 'Lys-63'-linked ubiquitin, leading to NF-kappa-B inactivation. Widely expressed. Constitutively overexpressed in certain tumor tissues. In terms of tissue distribution, major transcript. As to expression, minor transcript.

Its function is as follows. Adapter required to activate the JNK and NF-kappa-B signaling pathways through the specific recognition of 'Lys-63'-linked polyubiquitin chains by its RanBP2-type zinc finger (NZF). Acts as an adapter linking MAP3K7/TAK1 and TRAF6 to 'Lys-63'-linked polyubiquitin chains. The RanBP2-type zinc finger (NZF) specifically recognizes Lys-63'-linked polyubiquitin chains unanchored or anchored to the substrate proteins such as RIPK1/RIP1 and RIPK2: this acts as a scaffold to organize a large signaling complex to promote autophosphorylation of MAP3K7/TAK1, and subsequent activation of I-kappa-B-kinase (IKK) core complex by MAP3K7/TAK1. In terms of biological role, may be an oncogenic factor. This chain is TGF-beta-activated kinase 1 and MAP3K7-binding protein 3, found in Homo sapiens (Human).